Reading from the N-terminus, the 362-residue chain is Large ribosomal subunit protein uL3 (362 aa).

Positions 340–362 (RPPKKKPPVQRPQITYVSVESKQ) are disordered. The segment covering 351–362 (PQITYVSVESKQ) has biased composition (polar residues).

Belongs to the universal ribosomal protein uL3 family. As to quaternary structure, part of the 50S ribosomal subunit. Forms a cluster with proteins L14 and L24e.

One of the primary rRNA binding proteins, it binds directly near the 3'-end of the 23S rRNA, where it nucleates assembly of the 50S subunit. The protein is Large ribosomal subunit protein uL3 of Pyrococcus horikoshii (strain ATCC 700860 / DSM 12428 / JCM 9974 / NBRC 100139 / OT-3).